A 276-amino-acid polypeptide reads, in one-letter code: NH(3)-dependent NAD(+) synthetase (276 aa).

39–46 (GLSGGVDS) is a binding site for ATP. D45 lines the Mg(2+) pocket. R123 contributes to the deamido-NAD(+) binding site. T143 is an ATP binding site. E148 contributes to the Mg(2+) binding site. Deamido-NAD(+)-binding residues include K156 and D163. The ATP site is built by K172 and S194. 254 to 255 (HK) provides a ligand contact to deamido-NAD(+).

The protein belongs to the NAD synthetase family. Homodimer.

The catalysed reaction is deamido-NAD(+) + NH4(+) + ATP = AMP + diphosphate + NAD(+) + H(+). It functions in the pathway cofactor biosynthesis; NAD(+) biosynthesis; NAD(+) from deamido-NAD(+) (ammonia route): step 1/1. In terms of biological role, catalyzes the ATP-dependent amidation of deamido-NAD to form NAD. Uses ammonia as a nitrogen source. This Hyperthermus butylicus (strain DSM 5456 / JCM 9403 / PLM1-5) protein is NH(3)-dependent NAD(+) synthetase.